Reading from the N-terminus, the 37-residue chain is Cortex morphogenetic protein A (37 aa).

Can form a complex with SpoIVA and ClpX.

It localises to the forespore. Its function is as follows. Ensures proper spore envelope assembly. Represses premature cortex assembly until coat assembly successfully initiates. Also participates in a quality-control pathway that selectively removes defective sporulating cells through regulated cell death. Acts as an adaptator that delivers SpoIVA to the ClpXP proteolytic machinery for degradation, specifically in cells that improperly assemble the spore envelope. In Bacillus subtilis (strain 168), this protein is Cortex morphogenetic protein A.